Here is a 1230-residue protein sequence, read N- to C-terminus: Cullin-associated NEDD8-dissociated protein 1 (1230 aa).

Ala2 bears the N-acetylalanine mark. 12 HEAT repeats span residues 2–39 (ASASYHISNLLEKMTSSGKDFRFMATNDLMTELQKDSI), 44–81 (DSERKVVKMILKLQEDKNGEVQNLAVKCLGPLVSKVKE), 83–119 (QVETIVDTLCTNMLSDKEQLRDISSIGLKTVIGELPP), 131–165 (CKKITGRLTSAIAKQEDVSVQLEALDIMADMLSRQ), 171–208 (NFHPSILTCLLPQLTSPRLAVRKRTIIALGHLVMSCGN), 210–247 (VFVGLIEHLLSELSKNDSMSTTRTYIQCIAAISRQAGH), 248–282 (RIGEYLEKIIPLVVKFCNVDDDELREYCIQAFESF), 289–366 (EVYP…TRHE), 370–407 (EFYKTVSPALISRFKEREENVKADVFHAYLSLLKQTRP), 424–467 (PLTM…VLPG), 471–510 (QHIPVLVPGIIFSLNDESSSSNLKIDALSCLYVILCNHSP), and 515–552 (PHVQALVPPVVACVGDPFYKITSEALLVTQQLVKVIRP). Lys55 carries the N6-acetyllysine modification. Residues 315-343 (DEDEDENAMDADGGDDDDQGSDDEYSDDG) are disordered. Ser335 carries the post-translational modification Phosphoserine. Phosphoserine is present on Ser558. 15 HEAT repeats span residues 563 to 602 (PYIKDVFTCTIKRLKAADIDQDVKERAISCMGQIICNLGD), 606 to 643 (SDLPNTLQIFLERLKNEITRLTTVKALTLIAGSPLKID), 646 to 683 (PVLGEGVPILASFLRKNQRALKLGTLSALDILIKNYSD), 688 to 725 (AMIDAVLDELPPLISESDMHVSQMAISFLTTLAKVYPS), 729 to 768 (KISGSILNELIGLVRSPLLQGGALSAMLDFFQALVVTGTN), 770 to 808 (LGYMDLLRMLTGPVYSQSTALTHKQSYYSIAKCVAALTR), 809 to 845 (ACPKEGPAVVGQFIQDVKNSRSTDSIRLLALLSLGEV), 852 to 889 (SGQLELKSVILEAFSSPSEEVKSAASYALGSISVGNLP), 890 to 927 (EYLPFVLQEITSQPKRQYLLLHSLKEIISSASVVGLKP), 928 to 960 (YVENIWALLLKHCECAEEGTRNVVAECLGKLTL), 961 to 998 (IDPETLLPRLKGYLISGSSYARSSVVTAVKFTISDHPQ), 1002 to 1039 (PLLKNCIGDFLKTLEDPDLNVRRVALVTFNSAAHNKPS), 1043 to 1097 (DLLD…DSCL), 1099 to 1133 (RLDIFEFLNHVEDGLKDHYDIKMLTFLMLVRLSTL), and 1140 to 1189 (QRLD…IPEA). The residue at position 971 (Lys971) is an N6-acetyllysine.

Belongs to the CAND family. In terms of assembly, interacts with TBP. Part of a complex that contains CUL1 and RBX1. Interacts with unneddylated cullins: interacts with CUL1, CUL2, CUL3, CUL4A, CUL4B and CUL5. Does not bind neddylated CUL1. Interaction with cullins is abolished in presence of COMMD1, which antagonizes with CAND1 for interacting with cullins. Interacts with ERCC6. Interacts with DCUN1D1, DCUN1D2, DCUN1D3, DCUN1D4 and DCUN1D5; these interactions are bridged by cullins and strongly inhibits the neddylation of cullins.

Its subcellular location is the cytoplasm. The protein localises to the nucleus. Key assembly factor of SCF (SKP1-CUL1-F-box protein) E3 ubiquitin ligase complexes that promotes the exchange of the substrate-recognition F-box subunit in SCF complexes, thereby playing a key role in the cellular repertoire of SCF complexes. Acts as a F-box protein exchange factor. The exchange activity of CAND1 is coupled with cycles of neddylation conjugation: in the deneddylated state, cullin-binding CAND1 binds CUL1-RBX1, increasing dissociation of the SCF complex and promoting exchange of the F-box protein. Probably plays a similar role in other cullin-RING E3 ubiquitin ligase complexes. This is Cullin-associated NEDD8-dissociated protein 1 (CAND1) from Pongo abelii (Sumatran orangutan).